A 235-amino-acid chain; its full sequence is Large ribosomal subunit protein uL1 (235 aa).

Belongs to the universal ribosomal protein uL1 family. As to quaternary structure, part of the 50S ribosomal subunit.

In terms of biological role, binds directly to 23S rRNA. The L1 stalk is quite mobile in the ribosome, and is involved in E site tRNA release. Protein L1 is also a translational repressor protein, it controls the translation of the L11 operon by binding to its mRNA. This chain is Large ribosomal subunit protein uL1, found in Prochlorococcus marinus (strain MIT 9215).